A 209-amino-acid chain; its full sequence is MPRKYLESRLEDLQIELDAPALERLEGFLSLLMRWNRAYNLTAARDVETLIDRHLLDSLVVRRYLPAGALADVGSGAGFPGLVLALIEPDRSVTLIDSNGKKTRFLRQCATELGLHRVQVRQARMEALDDGDFAVVTARAVAPLATLIPGTRGLLAPDGALLALKGERIQEELAELPEALVEALDVHELPAIAGQGRACLVACRAAVHL.

S-adenosyl-L-methionine contacts are provided by Gly-74, Phe-79, and Arg-139.

This sequence belongs to the methyltransferase superfamily. RNA methyltransferase RsmG family.

Its subcellular location is the cytoplasm. It catalyses the reaction guanosine(527) in 16S rRNA + S-adenosyl-L-methionine = N(7)-methylguanosine(527) in 16S rRNA + S-adenosyl-L-homocysteine. Functionally, specifically methylates the N7 position of guanine in position 527 of 16S rRNA. This is Ribosomal RNA small subunit methyltransferase G from Halorhodospira halophila (strain DSM 244 / SL1) (Ectothiorhodospira halophila (strain DSM 244 / SL1)).